A 258-amino-acid polypeptide reads, in one-letter code: GTP cyclohydrolase FolE2 (258 aa).

The protein belongs to the GTP cyclohydrolase IV family.

The enzyme catalyses GTP + H2O = 7,8-dihydroneopterin 3'-triphosphate + formate + H(+). The protein operates within cofactor biosynthesis; 7,8-dihydroneopterin triphosphate biosynthesis; 7,8-dihydroneopterin triphosphate from GTP: step 1/1. In terms of biological role, converts GTP to 7,8-dihydroneopterin triphosphate. The protein is GTP cyclohydrolase FolE2 of Pseudothermotoga lettingae (strain ATCC BAA-301 / DSM 14385 / NBRC 107922 / TMO) (Thermotoga lettingae).